Consider the following 299-residue polypeptide: F-actin-capping protein subunit alpha-3 (299 aa).

Phosphoserine is present on residues Ser2 and Ser290.

Belongs to the F-actin-capping protein alpha subunit family. As to quaternary structure, component of the F-actin capping complex, composed of a heterodimer of an alpha and a beta subunit. Component of the WASH complex, composed of F-actin-capping protein subunit alpha (CAPZA1, CAPZA2 or CAPZA3), F-actin-capping protein subunit beta (CAPZB), WASHC1, WASHC2, WASHC3, WASHC4 and WASHC5. As to expression, exclusively expressed in the testis.

The protein resides in the cytoplasm. It is found in the cytoskeleton. Its function is as follows. F-actin-capping proteins bind in a Ca(2+)-independent manner to the fast growing ends of actin filaments (barbed end) thereby blocking the exchange of subunits at these ends. Unlike other capping proteins (such as gelsolin and severin), these proteins do not sever actin filaments. May play a role in the morphogenesis of spermatid. The sequence is that of F-actin-capping protein subunit alpha-3 (Capza3) from Rattus norvegicus (Rat).